Consider the following 197-residue polypeptide: MDMQSRIRRLFQASIETKQQAMEVLAPFIEQASQVMVNALLNEGKMLACGNGGSAGDAQHFSSELLNRFERERPSLPAIALTTDSSTITSIANDYSYNEIFSKQIRALGQPGDVLLAISTSGNSANIIQAIQAAHDREMIVVALTGRDGGGMASLLLPEDVEIRVPANVTARIQEVHLLAIHCLCDLIDSQLFGSEE.

Residues 36–197 (MVNALLNEGK…IDSQLFGSEE (162 aa)) form the SIS domain. 51–53 (NGG) lines the substrate pocket. Positions 60 and 64 each coordinate Zn(2+). Substrate-binding positions include Glu-64, 93–94 (ND), 119–121 (STS), Ser-124, and Gln-174. Zn(2+)-binding residues include Gln-174 and His-182.

Belongs to the SIS family. GmhA subfamily. As to quaternary structure, homotetramer. Zn(2+) is required as a cofactor.

Its subcellular location is the cytoplasm. It catalyses the reaction 2 D-sedoheptulose 7-phosphate = D-glycero-alpha-D-manno-heptose 7-phosphate + D-glycero-beta-D-manno-heptose 7-phosphate. Its pathway is carbohydrate biosynthesis; D-glycero-D-manno-heptose 7-phosphate biosynthesis; D-glycero-alpha-D-manno-heptose 7-phosphate and D-glycero-beta-D-manno-heptose 7-phosphate from sedoheptulose 7-phosphate: step 1/1. Functionally, catalyzes the isomerization of sedoheptulose 7-phosphate in D-glycero-D-manno-heptose 7-phosphate. This chain is Phosphoheptose isomerase, found in Pseudomonas syringae pv. syringae (strain B728a).